A 219-amino-acid polypeptide reads, in one-letter code: MIKKKHLEMMLDSLKRHPNPKADLEQYTIDGKLAADILFFAVNDFYNNVVIDLGCGTGRLAIGSKILGAKRAIGIDIDRESIEAAKENAKKLNVDVDFYCMDIRDVDDEFLNNVLGEDRDLKRVVIQNPPFGAQKKHADRVFLDKALEIGDIIYTIHNYPTKDFVIKYVEDKGGKITHIYEAFFRIPAIYEFHKKKVVEIPVVIFRIEKLGFETVFNFL.

This is an uncharacterized protein from Methanocaldococcus jannaschii (strain ATCC 43067 / DSM 2661 / JAL-1 / JCM 10045 / NBRC 100440) (Methanococcus jannaschii).